The sequence spans 384 residues: Sphingosine 1-phosphate receptor 4 (384 aa).

Topologically, residues 1-50 (MNATGTPVAPESCQQLAAGGHSRLIVLHYNHSGRLAGRGGPEDGGLGALR) are extracellular. Asparagine 2 and asparagine 30 each carry an N-linked (GlcNAc...) asparagine glycan. A helical membrane pass occupies residues 51 to 71 (GLSVAASCLVVLENLLVLAAI). The Cytoplasmic portion of the chain corresponds to 72–84 (TSHMRSRRWVYYC). The helical transmembrane segment at 85-105 (LVNITLSDLLTGAAYLANVLL) threads the bilayer. The Extracellular segment spans residues 106–117 (SGARTFRLAPAQ). The helical transmembrane segment at 118–138 (WFLREGLLFTALAASTFSLLF) threads the bilayer. The Cytoplasmic portion of the chain corresponds to 139 to 161 (TAGERFATMVRPVAESGATKTSR). A helical transmembrane segment spans residues 162-182 (VYGFIGLCWLLAALLGMLPLL). Residues 183 to 206 (GWNCLCAFDRCSSLLPLYSKRYIL) are Extracellular-facing. A helical transmembrane segment spans residues 207–227 (FCLVIFAGVLATIMGLYGAIF). Residues 228 to 252 (RLVQASGQKAPRPAARRKARRLLKT) lie on the Cytoplasmic side of the membrane. Residues 253–273 (VLMILLAFLVCWGPLFGLLLA) traverse the membrane as a helical segment. The Extracellular segment spans residues 274 to 288 (DVFGSNLWAQEYLRG). The chain crosses the membrane as a helical span at residues 289-309 (MDWILALAVLNSAVNPIIYSF). The Cytoplasmic portion of the chain corresponds to 310–384 (RSREVCRAVL…LSSISSVRSI (75 aa)). A lipid anchor (S-palmitoyl cysteine) is attached at cysteine 323.

Belongs to the G-protein coupled receptor 1 family. As to expression, specifically expressed in fetal and adult lymphoid and hematopoietic tissue as well as in lung. Considerable level of expression in adult and fetal spleen as well as adult peripheral leukocytes and lung. Lower expression in adult thymus, lymph node, bone marrow, and appendix as well as in fetal liver, thymus, and lung.

Its subcellular location is the cell membrane. Receptor for the lysosphingolipid sphingosine 1-phosphate (S1P). S1P is a bioactive lysophospholipid that elicits diverse physiological effect on most types of cells and tissues. May be involved in cell migration processes that are specific for lymphocytes. The chain is Sphingosine 1-phosphate receptor 4 (S1PR4) from Homo sapiens (Human).